Reading from the N-terminus, the 311-residue chain is Methionyl-tRNA formyltransferase (311 aa).

114–117 (SLLP) is a binding site for (6S)-5,6,7,8-tetrahydrofolate.

This sequence belongs to the Fmt family.

It carries out the reaction L-methionyl-tRNA(fMet) + (6R)-10-formyltetrahydrofolate = N-formyl-L-methionyl-tRNA(fMet) + (6S)-5,6,7,8-tetrahydrofolate + H(+). In terms of biological role, attaches a formyl group to the free amino group of methionyl-tRNA(fMet). The formyl group appears to play a dual role in the initiator identity of N-formylmethionyl-tRNA by promoting its recognition by IF2 and preventing the misappropriation of this tRNA by the elongation apparatus. The chain is Methionyl-tRNA formyltransferase from Corynebacterium diphtheriae (strain ATCC 700971 / NCTC 13129 / Biotype gravis).